The following is a 466-amino-acid chain: Argininosuccinate lyase (466 aa).

It belongs to the lyase 1 family. Argininosuccinate lyase subfamily.

The protein resides in the cytoplasm. It catalyses the reaction 2-(N(omega)-L-arginino)succinate = fumarate + L-arginine. It participates in amino-acid biosynthesis; L-arginine biosynthesis; L-arginine from L-ornithine and carbamoyl phosphate: step 3/3. The polypeptide is Argininosuccinate lyase (Campylobacter concisus (strain 13826)).